We begin with the raw amino-acid sequence, 164 residues long: Protein SprT (164 aa).

One can recognise a SprT-like domain in the interval 14–156; sequence QQAETFFKRP…LCKRCRETLV (143 aa). Histidine 69 serves as a coordination point for Zn(2+). The active site involves glutamate 70. Histidine 73 lines the Zn(2+) pocket.

Belongs to the SprT family. Zn(2+) is required as a cofactor.

The protein resides in the cytoplasm. This Pseudomonas putida (strain W619) protein is Protein SprT.